The primary structure comprises 201 residues: Large ribosomal subunit protein uL4 (201 aa).

The interval 45 to 71 (AQKTRAEVTGSGKKPWRQKGTGRARAG) is disordered.

The protein belongs to the universal ribosomal protein uL4 family. In terms of assembly, part of the 50S ribosomal subunit.

Its function is as follows. One of the primary rRNA binding proteins, this protein initially binds near the 5'-end of the 23S rRNA. It is important during the early stages of 50S assembly. It makes multiple contacts with different domains of the 23S rRNA in the assembled 50S subunit and ribosome. Functionally, forms part of the polypeptide exit tunnel. In Shewanella sp. (strain MR-4), this protein is Large ribosomal subunit protein uL4.